We begin with the raw amino-acid sequence, 600 residues long: Adenine deaminase (600 aa).

Belongs to the metallo-dependent hydrolases superfamily. Adenine deaminase family. Mn(2+) serves as cofactor.

The catalysed reaction is adenine + H2O + H(+) = hypoxanthine + NH4(+). The chain is Adenine deaminase from Chelativorans sp. (strain BNC1).